A 174-amino-acid chain; its full sequence is Large ribosomal subunit protein uL16 (174 aa).

The protein belongs to the universal ribosomal protein uL16 family.

This is Large ribosomal subunit protein uL16 from Staphylothermus marinus (strain ATCC 43588 / DSM 3639 / JCM 9404 / F1).